The following is a 524-amino-acid chain: MKPQELAKEVAKRRTFAIISHPDAGKTTITEQLLLFGGVIREAGTVKGRKSGHFAKSDWMEIEKKRGISVTSSVMQFNYQGKRINILDTPGHEDFSEDTYRTLMAVDAAVMVIDSAKGIEAQTKKLFKVVKQRGIPIFTFMNKLDRDGREPLDLIAELEDLLGIEGYAMNWPIGMGKGLKGLYDRVNQRIELYRREGDDRFLPLNDQGQLDPSQPLTQDSIYTQTLDDIELLNDAGNQFNLKKIMAGEQTPVFFGSALTNFGVETFLNSFVQYAPEPGPKKTEQGGEVNPTNPEFSAFVFKIQANMNPAHRDRIAFVRIVSGEFERGMDVILHRTGKTMRLNNSTEFMADTRETVSTAVAGDIVGLYDTGNFQIGDTIYQGKEPIQFEKLPQFTPELFVRVTPKNVMKQKSFHKGMQQLVQEGAVQLYKTYNTNDYILGAVGQLQFEVFQFRMLHEYHSEVIMTPIGSRTARWINPDQLDEKMSSSRNLLVQDIHGDPLFLFENQYAERWFADKYPDVKLTAKM.

One can recognise a tr-type G domain in the interval 11–278 (AKRRTFAIIS…SFVQYAPEPG (268 aa)). Residues 20–27 (SHPDAGKT), 88–92 (DTPGH), and 142–145 (NKLD) each bind GTP.

It belongs to the TRAFAC class translation factor GTPase superfamily. Classic translation factor GTPase family. PrfC subfamily.

It localises to the cytoplasm. Its function is as follows. Increases the formation of ribosomal termination complexes and stimulates activities of RF-1 and RF-2. It binds guanine nucleotides and has strong preference for UGA stop codons. It may interact directly with the ribosome. The stimulation of RF-1 and RF-2 is significantly reduced by GTP and GDP, but not by GMP. The sequence is that of Peptide chain release factor 3 from Lacticaseibacillus casei (strain BL23) (Lactobacillus casei).